Reading from the N-terminus, the 186-residue chain is TATA box-binding protein-like 1 (186 aa).

This sequence belongs to the TBP family. As to quaternary structure, binds TFIIA and TFIIB.

The protein resides in the cytoplasm. The protein localises to the nucleus. Its function is as follows. Part of a specialized transcription system that mediates the transcription of most ribosomal proteins through the 5'-TCT-3' motif which is a core promoter element at these genes. Seems to also mediate the transcription of NF1. Does not bind the TATA box. In Bos taurus (Bovine), this protein is TATA box-binding protein-like 1 (TBPL1).